A 505-amino-acid polypeptide reads, in one-letter code: Annexin A11 (505 aa).

2 stretches are compositionally biased toward pro residues: residues 1–17 (MSYPGYPPPPGGYPPAA) and 99–160 (PVPP…PVPL). Disordered regions lie at residues 1-38 (MSYPGYPPPPGGYPPAAPGGGPWGGAAYPPPPSMPPIG) and 84-199 (PVPP…DAPG). Over residues 161–177 (PGQQQPVPSYPGYPGSG) the composition is skewed to low complexity. Annexin repeat units follow at residues 200–271 (FDPL…ALMK), 272–343 (TPVL…SLSQ), 355–427 (SLAQ…AVVK), and 431–502 (NTPA…KICG). Residues Lys-248 and Lys-255 each carry the N6-acetyllysine modification. At Lys-479 the chain carries N6-acetyllysine.

It belongs to the annexin family. As to quaternary structure, interacts with S100A6. Interacts with PDCD6 in a calcium-dependent manner. Interacts with KIF23 during cytokinesis.

It is found in the cytoplasm. Its subcellular location is the melanosome. It localises to the nucleus envelope. The protein localises to the nucleus. The protein resides in the nucleoplasm. It is found in the cytoskeleton. Its subcellular location is the spindle. In terms of biological role, binds specifically to calcyclin in a calcium-dependent manner. Required for midbody formation and completion of the terminal phase of cytokinesis. This chain is Annexin A11 (ANXA11), found in Homo sapiens (Human).